A 462-amino-acid chain; its full sequence is Asparagine--tRNA ligase (462 aa).

This sequence belongs to the class-II aminoacyl-tRNA synthetase family. In terms of assembly, homodimer.

The protein localises to the cytoplasm. It carries out the reaction tRNA(Asn) + L-asparagine + ATP = L-asparaginyl-tRNA(Asn) + AMP + diphosphate + H(+). The chain is Asparagine--tRNA ligase from Thermosynechococcus vestitus (strain NIES-2133 / IAM M-273 / BP-1).